A 176-amino-acid polypeptide reads, in one-letter code: MSSNQQPVVLGKLGSCHGIKGWLKITAYTDSVEGIFDYSPWLIKENGEWREIKVTQWRYQGKAVVALLDGVETREQAQMLTNCEIAILPEQMNDLPADEFYWRDLIGCEVVNTTGYNMGIVDQIVETGSNDVLLVKANAKDSFGKVERMIPFVPEQFIKTVDLQGKQILVDWDPDF.

One can recognise a PRC barrel domain in the interval P96–F176.

The protein belongs to the RimM family. Binds ribosomal protein uS19.

It is found in the cytoplasm. An accessory protein needed during the final step in the assembly of 30S ribosomal subunit, possibly for assembly of the head region. Essential for efficient processing of 16S rRNA. May be needed both before and after RbfA during the maturation of 16S rRNA. It has affinity for free ribosomal 30S subunits but not for 70S ribosomes. This chain is Ribosome maturation factor RimM, found in Shewanella baltica (strain OS223).